The chain runs to 620 residues: Transcription factor kayak (620 aa).

2 disordered regions span residues 1 to 36 (MKVKVERTTITKKTTTTKPKPDEEDNNDDNSSSNGV) and 184 to 288 (SDTD…EKRR). Over residues 184–194 (SDTDDSNASWN) the composition is skewed to polar residues. Composition is skewed to low complexity over residues 201-233 (GDTTDTSSGATDSTSYQNNSMLGNGSNGSGANN) and 249-266 (ANNNSNTNTSNSATPAAR). One can recognise a bZIP domain in the interval 284–347 (EEKRRIRRER…NQLKYVIEAH (64 aa)). The interval 286–305 (KRRIRRERNKAAAARCRKRR) is basic motif. Positions 312 to 340 (LTEEVDALVKKGDTLKAEITTLTELRNQL) are leucine-zipper. The disordered stretch occupies residues 375–414 (STGGSSCGSVHSNHSHNNNNNNNNSNDSSSGTITGFDATL). The segment covering 377 to 405 (GGSSCGSVHSNHSHNNNNNNNNSNDSSSG) has biased composition (low complexity). Ser422 carries the post-translational modification Phosphoserine. Disordered stretches follow at residues 447–466 (GLDSESSSLDQDGPPPAKRA) and 590–620 (SGPLIPNCSSQNKHPLELPTPTTEPSKLCPL).

The protein belongs to the bZIP family. Fos subfamily. Homodimer. Heterodimer with Jra. The kay-Jra heterodimer binds more stably to the AP-1 site than either of the two proteins alone.

It localises to the nucleus. Developmentally regulated transcription factor AP-1 binds and recognizes the enhancer DNA sequence: 5'-TGA[CG]TCA-3'. May play a role in the function or determination of a particular subset of cells in the developing embryo. It is able to carry out its function either independently of or in conjunction with Jra. This Drosophila willistoni (Fruit fly) protein is Transcription factor kayak.